An 89-amino-acid polypeptide reads, in one-letter code: Small ribosomal subunit protein uS15 (89 aa).

This sequence belongs to the universal ribosomal protein uS15 family. Part of the 30S ribosomal subunit. Forms a bridge to the 50S subunit in the 70S ribosome, contacting the 23S rRNA.

In terms of biological role, one of the primary rRNA binding proteins, it binds directly to 16S rRNA where it helps nucleate assembly of the platform of the 30S subunit by binding and bridging several RNA helices of the 16S rRNA. Forms an intersubunit bridge (bridge B4) with the 23S rRNA of the 50S subunit in the ribosome. The sequence is that of Small ribosomal subunit protein uS15 from Micrococcus luteus (strain ATCC 4698 / DSM 20030 / JCM 1464 / CCM 169 / CCUG 5858 / IAM 1056 / NBRC 3333 / NCIMB 9278 / NCTC 2665 / VKM Ac-2230) (Micrococcus lysodeikticus).